A 320-amino-acid chain; its full sequence is o-succinylbenzoate synthase (320 aa).

The Proton donor role is filled by Lys133. Mg(2+) contacts are provided by Asp161, Glu190, and Asp213. The Proton acceptor role is filled by Lys235.

The protein belongs to the mandelate racemase/muconate lactonizing enzyme family. MenC type 1 subfamily. A divalent metal cation is required as a cofactor.

The enzyme catalyses (1R,6R)-6-hydroxy-2-succinyl-cyclohexa-2,4-diene-1-carboxylate = 2-succinylbenzoate + H2O. Its pathway is quinol/quinone metabolism; 1,4-dihydroxy-2-naphthoate biosynthesis; 1,4-dihydroxy-2-naphthoate from chorismate: step 4/7. It participates in quinol/quinone metabolism; menaquinone biosynthesis. Functionally, converts 2-succinyl-6-hydroxy-2,4-cyclohexadiene-1-carboxylate (SHCHC) to 2-succinylbenzoate (OSB). The chain is o-succinylbenzoate synthase from Escherichia coli (strain K12 / MC4100 / BW2952).